Here is a 477-residue protein sequence, read N- to C-terminus: 3-isopropylmalate dehydratase large subunit (477 aa).

3 residues coordinate [4Fe-4S] cluster: cysteine 351, cysteine 411, and cysteine 414.

The protein belongs to the aconitase/IPM isomerase family. LeuC type 1 subfamily. As to quaternary structure, heterodimer of LeuC and LeuD. It depends on [4Fe-4S] cluster as a cofactor.

The enzyme catalyses (2R,3S)-3-isopropylmalate = (2S)-2-isopropylmalate. It functions in the pathway amino-acid biosynthesis; L-leucine biosynthesis; L-leucine from 3-methyl-2-oxobutanoate: step 2/4. Its function is as follows. Catalyzes the isomerization between 2-isopropylmalate and 3-isopropylmalate, via the formation of 2-isopropylmaleate. This chain is 3-isopropylmalate dehydratase large subunit, found in Kineococcus radiotolerans (strain ATCC BAA-149 / DSM 14245 / SRS30216).